We begin with the raw amino-acid sequence, 154 residues long: Major allergen Dau c 1 (154 aa).

It belongs to the BetVI family. In terms of assembly, homodimer.

The polypeptide is Major allergen Dau c 1 (Daucus carota (Wild carrot)).